Consider the following 87-residue polypeptide: DNA-directed RNA polymerase subunit omega (87 aa).

This sequence belongs to the RNA polymerase subunit omega family. In terms of assembly, the RNAP catalytic core consists of 2 alpha, 1 beta, 1 beta' and 1 omega subunit. When a sigma factor is associated with the core the holoenzyme is formed, which can initiate transcription.

The enzyme catalyses RNA(n) + a ribonucleoside 5'-triphosphate = RNA(n+1) + diphosphate. In terms of biological role, promotes RNA polymerase assembly. Latches the N- and C-terminal regions of the beta' subunit thereby facilitating its interaction with the beta and alpha subunits. In Thioalkalivibrio sulfidiphilus (strain HL-EbGR7), this protein is DNA-directed RNA polymerase subunit omega.